We begin with the raw amino-acid sequence, 246 residues long: Acetoacetyl-CoA reductase (246 aa).

Residues 12 to 14 and 88 to 92 each bind NADP(+); these read GGI and CAGIT. Substrate contacts are provided by residues Asp94 and 147–150; that span reads QFGQ. The active-site Proton acceptor is the Tyr153. Position 183–186 (183–186) interacts with NADP(+); that stretch reads PGYV. 184-185 is a substrate binding site; the sequence is GY.

This sequence belongs to the short-chain dehydrogenases/reductases (SDR) family.

The protein localises to the cytoplasm. The catalysed reaction is a (3R)-3-hydroxyacyl-CoA + NADP(+) = a 3-oxoacyl-CoA + NADPH + H(+). It functions in the pathway biopolymer metabolism; poly-(R)-3-hydroxybutanoate biosynthesis. The chain is Acetoacetyl-CoA reductase from Allochromatium vinosum (strain ATCC 17899 / DSM 180 / NBRC 103801 / NCIMB 10441 / D) (Chromatium vinosum).